Here is a 444-residue protein sequence, read N- to C-terminus: Zinc finger protein ZIC 1 (444 aa).

The C2H2-type 1 zinc-finger motif lies at 222 to 257 (LICKWIEPEQLANPKKSCNKTFSTMHELVTHVTVEH). The segment at 271-293 (EECPREGKPFKAKYKLVNHIRVH) adopts a C2H2-type 2; degenerate zinc-finger fold. 3 C2H2-type zinc fingers span residues 299-323 (FPCP…KRTH), 329-353 (FKCE…MHVH), and 359-381 (YLCK…MKVH). The interval 372 to 432 (SSLRKHMKVH…SSAGHHTASH (61 aa)) is disordered. Over residues 383–432 (SSSQGSQPSPAASSGYESSTPPTIVSPSTENQTASSLSPSSSAGHHTASH) the composition is skewed to low complexity.

It belongs to the GLI C2H2-type zinc-finger protein family.

The protein resides in the nucleus. Its subcellular location is the cytoplasm. Its function is as follows. Acts as a transcriptional activator. Involved in neurogenesis. Plays important roles in the early stage of organogenesis of the CNS, as well as during dorsal spinal cord development and maturation of the cerebellum. Binds to the minimal GLI-consensus sequence 5'-TGGGTGGTC-3'. This Gallus gallus (Chicken) protein is Zinc finger protein ZIC 1 (ZIC1).